Consider the following 182-residue polypeptide: Large ribosomal subunit protein bL19m (182 aa).

Residues 1 to 21 (MFNAKHFFNLGLGFQWLQKRG) constitute a mitochondrion transit peptide.

The protein belongs to the bacterial ribosomal protein bL19 family. As to quaternary structure, component of the mitochondrial large ribosomal subunit (mt-LSU). Mature yeast 74S mitochondrial ribosomes consist of a small (37S) and a large (54S) subunit. The 37S small subunit contains a 15S ribosomal RNA (15S mt-rRNA) and at least 32 different proteins. The 54S large subunit contains a 21S rRNA (21S mt-rRNA) and at least 45 different proteins.

It is found in the mitochondrion. Functionally, component of the mitochondrial ribosome (mitoribosome), a dedicated translation machinery responsible for the synthesis of mitochondrial genome-encoded proteins, including at least some of the essential transmembrane subunits of the mitochondrial respiratory chain. The mitoribosomes are attached to the mitochondrial inner membrane and translation products are cotranslationally integrated into the membrane. bL19m is essential for respiration. This Schizosaccharomyces pombe (strain 972 / ATCC 24843) (Fission yeast) protein is Large ribosomal subunit protein bL19m (img1).